Here is a 231-residue protein sequence, read N- to C-terminus: Probable glutathione S-transferase GSTU1 (231 aa).

In terms of domain architecture, GST N-terminal spans 5-84 (KELVLLDFWV…YLDDAFPGTP (80 aa)). Glutathione is bound by residues Ser-15, Lys-42, Ile-56, and 68–69 (ES). Residues 97–220 (AAYARATARF…LPSPEKVYDF (124 aa)) enclose the GST C-terminal domain.

Belongs to the GST superfamily. Tau family.

It carries out the reaction RX + glutathione = an S-substituted glutathione + a halide anion + H(+). Its function is as follows. Conjugation of reduced glutathione to a wide number of exogenous and endogenous hydrophobic electrophiles. In Oryza sativa subsp. indica (Rice), this protein is Probable glutathione S-transferase GSTU1 (GSTU1).